A 110-amino-acid chain; its full sequence is Large ribosomal subunit protein uL22 (110 aa).

The protein belongs to the universal ribosomal protein uL22 family. As to quaternary structure, part of the 50S ribosomal subunit.

In terms of biological role, this protein binds specifically to 23S rRNA; its binding is stimulated by other ribosomal proteins, e.g. L4, L17, and L20. It is important during the early stages of 50S assembly. It makes multiple contacts with different domains of the 23S rRNA in the assembled 50S subunit and ribosome. The globular domain of the protein is located near the polypeptide exit tunnel on the outside of the subunit, while an extended beta-hairpin is found that lines the wall of the exit tunnel in the center of the 70S ribosome. The protein is Large ribosomal subunit protein uL22 of Pseudoalteromonas atlantica (strain T6c / ATCC BAA-1087).